We begin with the raw amino-acid sequence, 343 residues long: 3-dehydroquinate synthase (343 aa).

NAD(+)-binding positions include 61-66, 95-99, 119-120, K132, K141, and 159-162; these read SGEKYK, GVISD, TT, and FLKT. 3 residues coordinate Zn(2+): E174, H231, and H248.

Belongs to the sugar phosphate cyclases superfamily. Dehydroquinate synthase family. It depends on NAD(+) as a cofactor. Co(2+) is required as a cofactor. Requires Zn(2+) as cofactor.

It is found in the cytoplasm. The catalysed reaction is 7-phospho-2-dehydro-3-deoxy-D-arabino-heptonate = 3-dehydroquinate + phosphate. It participates in metabolic intermediate biosynthesis; chorismate biosynthesis; chorismate from D-erythrose 4-phosphate and phosphoenolpyruvate: step 2/7. Catalyzes the conversion of 3-deoxy-D-arabino-heptulosonate 7-phosphate (DAHP) to dehydroquinate (DHQ). This is 3-dehydroquinate synthase from Helicobacter pylori (strain J99 / ATCC 700824) (Campylobacter pylori J99).